The chain runs to 580 residues: External alternative NAD(P)H-ubiquinone oxidoreductase B3, mitochondrial (580 aa).

Residues 1–38 constitute a mitochondrion transit peptide; sequence MRPFAYFERLSQAFHDYPSLSKILVVSTISGGGLIVYS. 57 to 87 serves as a coordination point for FAD; the sequence is KVVLLGTGWAGASFLKTLNNSSYEVQVISPR. 221–257 contacts NAD(+); that stretch reads LHFVVVGGGPTGVEFASELHDFVNEDLVKLYPKAKNL. Positions 377–412 constitute an EF-hand domain; the sequence is KVMEDIAAIFKKADKENSGTLTMKEFHEVMSDICDR. Ca(2+) contacts are provided by aspartate 390, serine 394, threonine 396, and glutamate 401. A Microbody targeting signal motif is present at residues 571–580; it reads FIFGRDSSRI.

Belongs to the NADH dehydrogenase family. It depends on FAD as a cofactor. Expressed at low levels in seedlings, roots, stems, buds and flowers and, to a lower extent, in leaves and cotyledons.

It is found in the mitochondrion inner membrane. It localises to the peroxisome. The enzyme catalyses a quinone + NADH + H(+) = a quinol + NAD(+). The catalysed reaction is a ubiquinone + NADH + H(+) = a ubiquinol + NAD(+). Alternative NADH-ubiquinone oxidoreductase which catalyzes the oxidation of mitochondrial NADH does not translocate protons across the inner mitochondrial membrane. The protein is External alternative NAD(P)H-ubiquinone oxidoreductase B3, mitochondrial (NDB3) of Arabidopsis thaliana (Mouse-ear cress).